The primary structure comprises 309 residues: Ribonuclease Z (309 aa).

Positions 63, 65, 67, 68, 145, 216, and 274 each coordinate Zn(2+). The active-site Proton acceptor is aspartate 67.

This sequence belongs to the RNase Z family. As to quaternary structure, homodimer. It depends on Zn(2+) as a cofactor.

The catalysed reaction is Endonucleolytic cleavage of RNA, removing extra 3' nucleotides from tRNA precursor, generating 3' termini of tRNAs. A 3'-hydroxy group is left at the tRNA terminus and a 5'-phosphoryl group is left at the trailer molecule.. Its function is as follows. Zinc phosphodiesterase, which displays some tRNA 3'-processing endonuclease activity. Probably involved in tRNA maturation, by removing a 3'-trailer from precursor tRNA. The sequence is that of Ribonuclease Z from Streptococcus equi subsp. zooepidemicus (strain H70).